A 214-amino-acid chain; its full sequence is Octanoyltransferase (214 aa).

A BPL/LPL catalytic domain is found at 31 to 206 (KDDADEIWLL…QLAEQLGYNY (176 aa)). Substrate-binding positions include 70–77 (RGGQVTYH), 137–139 (SLG), and 150–152 (GLA). Residue Cys-168 is the Acyl-thioester intermediate of the active site.

It belongs to the LipB family.

It localises to the cytoplasm. The enzyme catalyses octanoyl-[ACP] + L-lysyl-[protein] = N(6)-octanoyl-L-lysyl-[protein] + holo-[ACP] + H(+). The protein operates within protein modification; protein lipoylation via endogenous pathway; protein N(6)-(lipoyl)lysine from octanoyl-[acyl-carrier-protein]: step 1/2. In terms of biological role, catalyzes the transfer of endogenously produced octanoic acid from octanoyl-acyl-carrier-protein onto the lipoyl domains of lipoate-dependent enzymes. Lipoyl-ACP can also act as a substrate although octanoyl-ACP is likely to be the physiological substrate. The chain is Octanoyltransferase from Marinomonas sp. (strain MWYL1).